A 72-amino-acid polypeptide reads, in one-letter code: General transcription factor IIH subunit 5 (72 aa).

Belongs to the TFB5 family. As to quaternary structure, component of the 7-subunit TFIIH core complex composed of XPB/repB, XPD/repD, gtf2h1, gtf2h2, gtf2h3, gtf2h4 and gtf2h5, which is active in NER. The core complex associates with the 3-subunit CDK-activating kinase (CAK) module composed of cycH/cyclin H, cdk7 and mnat1 to form the 10-subunit holoenzyme (holo-TFIIH) active in transcription.

Its subcellular location is the nucleus. Its function is as follows. Component of the general transcription and DNA repair factor IIH (TFIIH) core complex, which is involved in general and transcription-coupled nucleotide excision repair (NER) of damaged DNA and, when complexed to CAK, in RNA transcription by RNA polymerase II. In NER, TFIIH acts by opening DNA around the lesion to allow the excision of the damaged oligonucleotide and its replacement by a new DNA fragment. In transcription, TFIIH has an essential role in transcription initiation. When the pre-initiation complex (PIC) has been established, TFIIH is required for promoter opening and promoter escape. Phosphorylation of the C-terminal tail (CTD) of the largest subunit of RNA polymerase II by the kinase module CAK controls the initiation of transcription. This Dictyostelium discoideum (Social amoeba) protein is General transcription factor IIH subunit 5 (gtf2h5).